We begin with the raw amino-acid sequence, 287 residues long: Phosphoribosylaminoimidazole-succinocarboxamide synthase (287 aa).

The protein belongs to the SAICAR synthetase family.

The enzyme catalyses 5-amino-1-(5-phospho-D-ribosyl)imidazole-4-carboxylate + L-aspartate + ATP = (2S)-2-[5-amino-1-(5-phospho-beta-D-ribosyl)imidazole-4-carboxamido]succinate + ADP + phosphate + 2 H(+). It participates in purine metabolism; IMP biosynthesis via de novo pathway; 5-amino-1-(5-phospho-D-ribosyl)imidazole-4-carboxamide from 5-amino-1-(5-phospho-D-ribosyl)imidazole-4-carboxylate: step 1/2. The protein is Phosphoribosylaminoimidazole-succinocarboxamide synthase of Neisseria meningitidis serogroup C (strain 053442).